The following is a 249-amino-acid chain: MASRRMETKPVITCLKTLLIIYSFVFWITGVILLAVGVWGKLTLGTYISLIAENSTNAPYVLIGTGTTIVVFGLFGCFATCRGSPWMLKLYAMFLSLVFLAELVAGISGFVFRHEIKDTFLRTYTDAMQTYNGNDERSRAVDHVQRSLSCCGVQNYTNWSTSPYFLEHGIPPSCCMNETDCNPQDLHNLTVAATKVNQKGCYDLVTSFMETNMGIIAGVAFGIAFSQLIGMLLACCLSRFITANQYEMV.

Topologically, residues 1–16 (MASRRMETKPVITCLK) are cytoplasmic. Residues 17 to 40 (TLLIIYSFVFWITGVILLAVGVWG) form a helical membrane-spanning segment. Residues 41-56 (KLTLGTYISLIAENST) lie on the Extracellular side of the membrane. Asn-54 carries an N-linked (GlcNAc...) asparagine glycan. The chain crosses the membrane as a helical span at residues 57 to 75 (NAPYVLIGTGTTIVVFGLF). Over 76–86 (GCFATCRGSPW) the chain is Cytoplasmic. Residues 87 to 112 (MLKLYAMFLSLVFLAELVAGISGFVF) form a helical membrane-spanning segment. Residues 113–213 (RHEIKDTFLR…LVTSFMETNM (101 aa)) are Extracellular-facing. N-linked (GlcNAc...) asparagine glycans are attached at residues Asn-155, Asn-158, Asn-177, and Asn-188. A helical transmembrane segment spans residues 214-234 (GIIAGVAFGIAFSQLIGMLLA). Residues 235–249 (CCLSRFITANQYEMV) lie on the Cytoplasmic side of the membrane.

It belongs to the tetraspanin (TM4SF) family. In terms of assembly, (Microbial infection) Interacts with herpes simplex virus 1 (HHV-1) UL35. Not solely expressed in T-cells. Expressed in acute myelocytic leukemia cells of some patients.

Its subcellular location is the membrane. In terms of biological role, may be involved in cell proliferation and cell motility. The protein is Tetraspanin-7 (TSPAN7) of Homo sapiens (Human).